We begin with the raw amino-acid sequence, 181 residues long: Probable inosine/xanthosine triphosphatase (181 aa).

Asp65 serves as a coordination point for Mg(2+).

This sequence belongs to the YjjX NTPase family. Homodimer. The cofactor is Mg(2+). Requires Mn(2+) as cofactor.

The enzyme catalyses XTP + H2O = XDP + phosphate + H(+). It carries out the reaction ITP + H2O = IDP + phosphate + H(+). Its function is as follows. Phosphatase that hydrolyzes non-canonical purine nucleotides such as XTP and ITP to their respective diphosphate derivatives. Probably excludes non-canonical purines from DNA/RNA precursor pool, thus preventing their incorporation into DNA/RNA and avoiding chromosomal lesions. The chain is Probable inosine/xanthosine triphosphatase from Caldivirga maquilingensis (strain ATCC 700844 / DSM 13496 / JCM 10307 / IC-167).